Consider the following 278-residue polypeptide: HTH-type transcriptional activator RhaS (278 aa).

Residues 174 to 272 (NQLMAWLEDH…NWSPRDIRQG (99 aa)) enclose the HTH araC/xylS-type domain. 2 DNA-binding regions (H-T-H motif) span residues 191–212 (EAVA…KQHT) and 239–262 (VTEI…RREF).

In terms of assembly, binds DNA as a dimer.

It localises to the cytoplasm. Activates expression of the rhaBAD and rhaT operons. In Salmonella enteritidis PT4 (strain P125109), this protein is HTH-type transcriptional activator RhaS.